Here is a 286-residue protein sequence, read N- to C-terminus: Pantothenate synthetase (286 aa).

30–37 (MGNLHAGH) provides a ligand contact to ATP. His37 (proton donor) is an active-site residue. Gln61 contributes to the (R)-pantoate binding site. Gln61 provides a ligand contact to beta-alanine. 149 to 152 (GEKD) lines the ATP pocket. Position 155 (Gln155) interacts with (R)-pantoate. ATP is bound by residues Val178 and 186-189 (MSSR).

This sequence belongs to the pantothenate synthetase family. Homodimer.

The protein resides in the cytoplasm. The catalysed reaction is (R)-pantoate + beta-alanine + ATP = (R)-pantothenate + AMP + diphosphate + H(+). Its pathway is cofactor biosynthesis; (R)-pantothenate biosynthesis; (R)-pantothenate from (R)-pantoate and beta-alanine: step 1/1. In terms of biological role, catalyzes the condensation of pantoate with beta-alanine in an ATP-dependent reaction via a pantoyl-adenylate intermediate. The polypeptide is Pantothenate synthetase (Methylococcus capsulatus (strain ATCC 33009 / NCIMB 11132 / Bath)).